The primary structure comprises 507 residues: Probable Xaa-Pro aminopeptidase HCAG_02413 (507 aa).

Mn(2+) contacts are provided by Asp283, Asp294, Glu431, and Glu469.

This sequence belongs to the peptidase M24B family. The cofactor is Mn(2+).

The catalysed reaction is Release of any N-terminal amino acid, including proline, that is linked to proline, even from a dipeptide or tripeptide.. Functionally, catalyzes the removal of a penultimate prolyl residue from the N-termini of peptides. In Ajellomyces capsulatus (strain NAm1 / WU24) (Darling's disease fungus), this protein is Probable Xaa-Pro aminopeptidase HCAG_02413.